Reading from the N-terminus, the 509-residue chain is 2-isopropylmalate synthase (509 aa).

One can recognise a Pyruvate carboxyltransferase domain in the interval 5–267 (IQIFDTTLRD…QTALNLEETK (263 aa)). The Mn(2+) site is built by Asp14, His202, His204, and Asn238. The tract at residues 391–509 (KLETLQLQYV…AAENVEKVGN (119 aa)) is regulatory domain.

The protein belongs to the alpha-IPM synthase/homocitrate synthase family. LeuA type 1 subfamily. In terms of assembly, homodimer. The cofactor is Mn(2+).

It localises to the cytoplasm. The catalysed reaction is 3-methyl-2-oxobutanoate + acetyl-CoA + H2O = (2S)-2-isopropylmalate + CoA + H(+). Its pathway is amino-acid biosynthesis; L-leucine biosynthesis; L-leucine from 3-methyl-2-oxobutanoate: step 1/4. In terms of biological role, catalyzes the condensation of the acetyl group of acetyl-CoA with 3-methyl-2-oxobutanoate (2-ketoisovalerate) to form 3-carboxy-3-hydroxy-4-methylpentanoate (2-isopropylmalate). In Staphylococcus aureus (strain bovine RF122 / ET3-1), this protein is 2-isopropylmalate synthase.